The sequence spans 298 residues: NADH-ubiquinone oxidoreductase chain 1 (298 aa).

The next 7 membrane-spanning stretches (helical) occupy residues 2-22, 71-91, 99-119, 136-156, 171-191, 231-251, and 272-292; these read IYFI…LTLL, LVAP…VPFI, LSFL…MVAG, AQTI…LMLF, VGWP…TILA, ILFM…LMFC, and LMHL…CFYW.

This sequence belongs to the complex I subunit 1 family.

The protein resides in the mitochondrion inner membrane. It catalyses the reaction a ubiquinone + NADH + 5 H(+)(in) = a ubiquinol + NAD(+) + 4 H(+)(out). In terms of biological role, core subunit of the mitochondrial membrane respiratory chain NADH dehydrogenase (Complex I) that is believed to belong to the minimal assembly required for catalysis. Complex I functions in the transfer of electrons from NADH to the respiratory chain. The immediate electron acceptor for the enzyme is believed to be ubiquinone. This Artemia franciscana (Brine shrimp) protein is NADH-ubiquinone oxidoreductase chain 1 (ND1).